We begin with the raw amino-acid sequence, 293 residues long: SAGA-associated factor 29 (293 aa).

The stretch at 3 to 88 (LVSADSRIAE…KALDKIAEIK (86 aa)) forms a coiled coil. An SGF29 C-terminal domain is found at 152-293 (GDYVARPGDK…VVACKEPKKK (142 aa)). Histone H3K4me3 N-terminus binding stretches follow at residues 194 to 196 (DID) and 240 to 243 (QTTC). The histone H3K4me3 binding stretch occupies residues 264-266 (FED). At lysine 288 the chain carries N6-acetyllysine.

It belongs to the SGF29 family. Interacts with dimethylated and trimethylated 'Lys-4' of histone H3 (H3K4me2 and H3K4me3), with a preference for the trimethylated form (H3K4me3). Component of some SAGA-type complexes. Component of the ADA2A-containing complex (ATAC), composed of KAT14, KAT2A, TADA2L, TADA3L, ZZ3, MBIP, WDR5, YEATS2, CCDC101 and DR1. Interacts with (methylated) CGAS. Interacts with TADA3L, GCN5L2, SUPT3H and MYC.

Its subcellular location is the nucleus. Its function is as follows. Chromatin reader component of some histone acetyltransferase (HAT) SAGA-type complexes like the TFTC-HAT, ATAC or STAGA complexes. SGF29 specifically recognizes and binds methylated 'Lys-4' of histone H3 (H3K4me), with a preference for trimethylated form (H3K4me3). In the SAGA-type complexes, SGF29 is required to recruit complexes to H3K4me. Involved in the response to endoplasmic reticulum (ER) stress by recruiting the SAGA complex to H3K4me, thereby promoting histone H3 acetylation and cell survival. Also binds non-histone proteins that are methylated on Lys residues: specifically recognizes and binds CGAS monomethylated on 'Lys-506'. This chain is SAGA-associated factor 29, found in Homo sapiens (Human).